The sequence spans 472 residues: 3-isopropylmalate dehydratase large subunit (472 aa).

The tract at residues 61–80 (TPDHNVPTTQKERASGVEGI) is disordered. [4Fe-4S] cluster is bound by residues Cys353, Cys414, and Cys417.

Belongs to the aconitase/IPM isomerase family. LeuC type 1 subfamily. In terms of assembly, heterodimer of LeuC and LeuD. The cofactor is [4Fe-4S] cluster.

It carries out the reaction (2R,3S)-3-isopropylmalate = (2S)-2-isopropylmalate. It functions in the pathway amino-acid biosynthesis; L-leucine biosynthesis; L-leucine from 3-methyl-2-oxobutanoate: step 2/4. Catalyzes the isomerization between 2-isopropylmalate and 3-isopropylmalate, via the formation of 2-isopropylmaleate. The sequence is that of 3-isopropylmalate dehydratase large subunit from Saccharophagus degradans (strain 2-40 / ATCC 43961 / DSM 17024).